The chain runs to 136 residues: ATP synthase epsilon chain (136 aa).

This sequence belongs to the ATPase epsilon chain family. As to quaternary structure, F-type ATPases have 2 components, CF(1) - the catalytic core - and CF(0) - the membrane proton channel. CF(1) has five subunits: alpha(3), beta(3), gamma(1), delta(1), epsilon(1). CF(0) has three main subunits: a, b and c.

The protein resides in the cell inner membrane. Its function is as follows. Produces ATP from ADP in the presence of a proton gradient across the membrane. This is ATP synthase epsilon chain from Myxococcus xanthus (strain DK1622).